Reading from the N-terminus, the 122-residue chain is Large ribosomal subunit protein bL12 (122 aa).

Belongs to the bacterial ribosomal protein bL12 family. As to quaternary structure, homodimer. Part of the ribosomal stalk of the 50S ribosomal subunit. Forms a multimeric L10(L12)X complex, where L10 forms an elongated spine to which 2 to 4 L12 dimers bind in a sequential fashion. Binds GTP-bound translation factors.

Functionally, forms part of the ribosomal stalk which helps the ribosome interact with GTP-bound translation factors. Is thus essential for accurate translation. The polypeptide is Large ribosomal subunit protein bL12 (Xylella fastidiosa (strain M23)).